The following is a 482-amino-acid chain: Altronate oxidoreductase (482 aa).

18-29 (IIQFGEGNFLRA) is an NAD(+) binding site.

The protein belongs to the mannitol dehydrogenase family. UxaB subfamily.

The catalysed reaction is D-altronate + NAD(+) = keto-D-tagaturonate + NADH + H(+). It functions in the pathway carbohydrate metabolism; pentose and glucuronate interconversion. This chain is Altronate oxidoreductase, found in Shigella sonnei (strain Ss046).